Consider the following 133-residue polypeptide: Ribosome-binding factor A (133 aa).

Belongs to the RbfA family. In terms of assembly, monomer. Binds 30S ribosomal subunits, but not 50S ribosomal subunits or 70S ribosomes.

It localises to the cytoplasm. In terms of biological role, one of several proteins that assist in the late maturation steps of the functional core of the 30S ribosomal subunit. Associates with free 30S ribosomal subunits (but not with 30S subunits that are part of 70S ribosomes or polysomes). Required for efficient processing of 16S rRNA. May interact with the 5'-terminal helix region of 16S rRNA. The sequence is that of Ribosome-binding factor A from Psychromonas ingrahamii (strain DSM 17664 / CCUG 51855 / 37).